Here is a 360-residue protein sequence, read N- to C-terminus: Protein DVR-1 (360 aa).

The N-terminal stretch at Met-1–Val-16 is a signal peptide. Residues Thr-17–Arg-246 constitute a propeptide that is removed on maturation. N-linked (GlcNAc...) asparagine glycans are attached at residues Asn-113, Asn-181, and Asn-301. Cystine bridges form between Cys-259-Cys-325, Cys-288-Cys-357, and Cys-292-Cys-359.

Belongs to the TGF-beta family. As to quaternary structure, homodimer. In terms of tissue distribution, vegetal region of the egg.

The protein localises to the secreted. Functionally, serves to facilitate the differentiation of either mesoderm or endoderm either as a cofactor in an instructive signal or by providing permissive environment. This is Protein DVR-1 (dvr1) from Xenopus laevis (African clawed frog).